The primary structure comprises 429 residues: Adenylosuccinate synthetase (429 aa).

Residues 12–18 (GDEGKGK) and 40–42 (GHT) each bind GTP. The Proton acceptor role is filled by D13. Mg(2+) contacts are provided by D13 and G40. Residues 13 to 16 (DEGK), 38 to 41 (NAGH), T128, R142, Q223, T238, and R302 contribute to the IMP site. The active-site Proton donor is the H41. Position 298–304 (298–304 (VNTGRKR)) interacts with substrate. Residues R304, 330-332 (KLD), and 412-414 (GVG) contribute to the GTP site.

This sequence belongs to the adenylosuccinate synthetase family. In terms of assembly, homodimer. It depends on Mg(2+) as a cofactor.

It is found in the cytoplasm. The catalysed reaction is IMP + L-aspartate + GTP = N(6)-(1,2-dicarboxyethyl)-AMP + GDP + phosphate + 2 H(+). It participates in purine metabolism; AMP biosynthesis via de novo pathway; AMP from IMP: step 1/2. Plays an important role in the de novo pathway of purine nucleotide biosynthesis. Catalyzes the first committed step in the biosynthesis of AMP from IMP. The protein is Adenylosuccinate synthetase of Corynebacterium glutamicum (strain R).